The following is a 508-amino-acid chain: Glycerol kinase (508 aa).

ADP is bound at residue Thr-14. ATP-binding residues include Thr-14, Thr-15, and Ser-16. Thr-14 is a sn-glycerol 3-phosphate binding site. An ADP-binding site is contributed by Arg-18. 4 residues coordinate sn-glycerol 3-phosphate: Arg-84, Glu-85, Tyr-134, and Asp-247. Arg-84, Glu-85, Tyr-134, Asp-247, and Gln-248 together coordinate glycerol. ADP is bound by residues Thr-269 and Gly-313. ATP contacts are provided by Thr-269, Gly-313, Gln-317, and Gly-416. ADP is bound at residue Gly-416.

The protein belongs to the FGGY kinase family.

It catalyses the reaction glycerol + ATP = sn-glycerol 3-phosphate + ADP + H(+). It participates in polyol metabolism; glycerol degradation via glycerol kinase pathway; sn-glycerol 3-phosphate from glycerol: step 1/1. Inhibited by fructose 1,6-bisphosphate (FBP). Key enzyme in the regulation of glycerol uptake and metabolism. Catalyzes the phosphorylation of glycerol to yield sn-glycerol 3-phosphate. The polypeptide is Glycerol kinase (Mycoplasmoides gallisepticum (strain R(low / passage 15 / clone 2)) (Mycoplasma gallisepticum)).